A 1190-amino-acid chain; its full sequence is DNA-directed RNA polymerase subunit beta (1190 aa).

This sequence belongs to the RNA polymerase beta chain family. The RNAP catalytic core consists of 2 alpha, 1 beta, 1 beta' and 1 omega subunit. When a sigma factor is associated with the core the holoenzyme is formed, which can initiate transcription.

It catalyses the reaction RNA(n) + a ribonucleoside 5'-triphosphate = RNA(n+1) + diphosphate. DNA-dependent RNA polymerase catalyzes the transcription of DNA into RNA using the four ribonucleoside triphosphates as substrates. In Streptococcus suis (strain 98HAH33), this protein is DNA-directed RNA polymerase subunit beta.